The chain runs to 291 residues: Phosphatidylglycerol--prolipoprotein diacylglyceryl transferase (291 aa).

7 helical membrane-spanning segments follow: residues 21–41 (IALH…MWLA), 60–80 (LLYA…VLFY), 96–116 (WDGG…MWWF), 124–144 (FLQV…MGRI), 198–218 (SQLY…NLYI), 225–245 (GSVS…VEFF), and 258–278 (ISMG…MMIW). Arginine 143 provides a ligand contact to a 1,2-diacyl-sn-glycero-3-phospho-(1'-sn-glycerol).

The protein belongs to the Lgt family.

The protein resides in the cell inner membrane. The enzyme catalyses L-cysteinyl-[prolipoprotein] + a 1,2-diacyl-sn-glycero-3-phospho-(1'-sn-glycerol) = an S-1,2-diacyl-sn-glyceryl-L-cysteinyl-[prolipoprotein] + sn-glycerol 1-phosphate + H(+). The protein operates within protein modification; lipoprotein biosynthesis (diacylglyceryl transfer). Functionally, catalyzes the transfer of the diacylglyceryl group from phosphatidylglycerol to the sulfhydryl group of the N-terminal cysteine of a prolipoprotein, the first step in the formation of mature lipoproteins. The polypeptide is Phosphatidylglycerol--prolipoprotein diacylglyceryl transferase (Photorhabdus laumondii subsp. laumondii (strain DSM 15139 / CIP 105565 / TT01) (Photorhabdus luminescens subsp. laumondii)).